Here is a 1486-residue protein sequence, read N- to C-terminus: Protein PRRC2B (1486 aa).

5 disordered regions span residues 1–20 (MSDR…KYST), 39–306 (VIPR…FPLP), 320–341 (QMND…PLRQ), 385–519 (KFSD…AREE), and 531–658 (LDQK…EQLY). The span at 88–137 (ANKQDQQDPKSSSVTASQPPESQPQPGLQKSVSNLQKPTQSISQENTNSV) shows a compositional bias: polar residues. 4 positions are modified to phosphoserine: Ser166, Ser168, Ser222, and Ser226. The segment covering 219-235 (SAASLSASPTELGSRNA) has biased composition (polar residues). Position 228 is a phosphothreonine (Thr228). Residue Lys251 forms a Glycyl lysine isopeptide (Lys-Gly) (interchain with G-Cter in SUMO2) linkage. Residues 288–300 (SPQSSENQTTVER) show a composition bias toward polar residues. Residues Ser387 and Ser415 each carry the phosphoserine modification. Composition is skewed to basic and acidic residues over residues 422–433 (TDAKRTQEEGKD), 478–488 (HSAEDKEDKPP), and 501–519 (AVER…AREE). The residue at position 479 (Ser479) is a Phosphoserine. Residues 494–544 (IQSEMSEAVERARKRREEEERRAREERLAACAAKLKQLDQKCRQAQKANET) adopt a coiled-coil conformation. At Ser555 the chain carries Phosphoserine. The segment covering 600 to 611 (SNSSSSSSSSSS) has biased composition (low complexity). Ser621 carries the phosphoserine modification. The segment covering 638–656 (QRQQQQQQQQQQQQQQQEQ) has biased composition (low complexity). Residue Lys751 forms a Glycyl lysine isopeptide (Lys-Gly) (interchain with G-Cter in SUMO2) linkage. Thr753 bears the Phosphothreonine mark. Ser762 and Ser793 each carry phosphoserine. Disordered stretches follow at residues 792 to 847 (RSPD…EARK), 893 to 918 (EERR…IPPR), and 950 to 1080 (ALPV…PGAV). A coiled-coil region spans residues 880–904 (IEVLTKKQRRLLEEERRKKEQAAQV). A compositionally biased stretch (polar residues) spans 960–986 (SWRTAVTAFSSTEPGTSEQGFKSSQGD). Low complexity predominate over residues 998 to 1007 (SSATSSQRSS). Basic and acidic residues-rich tracts occupy residues 1025 to 1055 (SKAD…EHRP) and 1062 to 1074 (RSLK…EGAE). Phosphoserine is present on residues Ser1070 and Ser1159. 3 disordered regions span residues 1177 to 1205 (KAWE…SSVG), 1410 to 1443 (QSIQ…TSRE), and 1455 to 1486 (ADSK…AWEP). Over residues 1181–1191 (NSPSLPEQSSP) the composition is skewed to polar residues. Over residues 1410 to 1421 (QSIQLPPGQSLS) the composition is skewed to low complexity. Residues 1457–1474 (SKQNVPTGGSAPSPQAYR) are compositionally biased toward polar residues.

In Mus musculus (Mouse), this protein is Protein PRRC2B (Prrc2b).